Reading from the N-terminus, the 313-residue chain is Ribosomal RNA small subunit methyltransferase H (313 aa).

S-adenosyl-L-methionine-binding positions include 35–37, D55, F81, D103, and Q110; that span reads GGH.

This sequence belongs to the methyltransferase superfamily. RsmH family.

Its subcellular location is the cytoplasm. It carries out the reaction cytidine(1402) in 16S rRNA + S-adenosyl-L-methionine = N(4)-methylcytidine(1402) in 16S rRNA + S-adenosyl-L-homocysteine + H(+). In terms of biological role, specifically methylates the N4 position of cytidine in position 1402 (C1402) of 16S rRNA. The chain is Ribosomal RNA small subunit methyltransferase H from Pseudomonas syringae pv. tomato (strain ATCC BAA-871 / DC3000).